A 165-amino-acid chain; its full sequence is Ubiquitin-fold modifier-conjugating enzyme 1 (165 aa).

Catalysis depends on C116, which acts as the Glycyl thioester intermediate.

The protein belongs to the ubiquitin-conjugating enzyme family. UFC1 subfamily.

In terms of biological role, E2-like enzyme which forms an intermediate with UFM1 via a thioester linkage. This Drosophila virilis (Fruit fly) protein is Ubiquitin-fold modifier-conjugating enzyme 1.